A 284-amino-acid polypeptide reads, in one-letter code: GPN-loop GTPase 3 (284 aa).

13 to 18 serves as a coordination point for GTP; it reads GSGKST. The Gly-Pro-Asn (GPN)-loop; involved in dimer interface signature appears at 72–74; it reads GPN. A GTP-binding site is contributed by 174–177; the sequence is TKMD. The interval 261–284 is disordered; sequence KEPKEHEEESSSMFDEYFQERQNE.

The protein belongs to the GPN-loop GTPase family. In terms of assembly, heterodimer with GPN1. Binds to RNA polymerase II (RNAPII). Interacts directly with subunits RPB4 and RPB7 and the CTD of RPB1.

In terms of biological role, small GTPase required for proper localization of RNA polymerase II (RNAPII). May act at an RNAP assembly step prior to nuclear import. This Rattus norvegicus (Rat) protein is GPN-loop GTPase 3.